Consider the following 101-residue polypeptide: Urease subunit beta (101 aa).

The protein belongs to the urease beta subunit family. In terms of assembly, heterotrimer of UreA (gamma), UreB (beta) and UreC (alpha) subunits. Three heterotrimers associate to form the active enzyme.

It is found in the cytoplasm. The enzyme catalyses urea + 2 H2O + H(+) = hydrogencarbonate + 2 NH4(+). It functions in the pathway nitrogen metabolism; urea degradation; CO(2) and NH(3) from urea (urease route): step 1/1. This is Urease subunit beta from Cupriavidus metallidurans (strain ATCC 43123 / DSM 2839 / NBRC 102507 / CH34) (Ralstonia metallidurans).